Here is a 417-residue protein sequence, read N- to C-terminus: D-amino acid dehydrogenase (417 aa).

Position 3–17 (3–17 (VIVIGSGVIGLTSAW)) interacts with FAD.

The protein belongs to the DadA oxidoreductase family. The cofactor is FAD.

It catalyses the reaction a D-alpha-amino acid + A + H2O = a 2-oxocarboxylate + AH2 + NH4(+). The protein operates within amino-acid degradation; D-alanine degradation; NH(3) and pyruvate from D-alanine: step 1/1. Functionally, oxidative deamination of D-amino acids. The sequence is that of D-amino acid dehydrogenase from Vibrio atlanticus (strain LGP32) (Vibrio splendidus (strain Mel32)).